The primary structure comprises 372 residues: Alpha-parvin (372 aa).

The interval 1-31 (MATSPQKSPLVPKSPTPKSPPSRKKDDSFLG) is disordered. Alanine 2 carries the N-acetylalanine modification. 3 positions are modified to phosphoserine: serine 8, serine 14, and serine 19. An interaction with ARHGAP31 region spans residues 21 to 25 (PSRKK). 2 positions are modified to phosphoserine: serine 28 and serine 62. Calponin-homology (CH) domains are found at residues 95–202 (QELM…QYFR) and 262–369 (NVVK…TKYR). A required for interaction with TESK1 and ILK region spans residues 223 to 372 (GILQSRQIQE…NLFTKYRNVE (150 aa)).

The protein belongs to the parvin family. As to quaternary structure, component of the heterotrimeric IPP (ILK-PINCH-PARVIN) complex composed of ILK, LIMS1/PINCH and PARVA; the complex binds to F-actin via the C-terminal tail of LIMS1 and the N-terminal region of PARVA, promoting F-actin filament bundling. Interacts with TGFB1I1. Interacts with ARHGAP31. Interacts with the actin cytoskeleton. Interacts (via C-terminus) with TESK1 (via C-terminus); the interaction inhibits TESK1 kinase activity. Interacts with PXN/PAXILLIN (via LD motif 4).

It localises to the cell junction. The protein localises to the focal adhesion. It is found in the cell membrane. Its subcellular location is the cytoplasm. The protein resides in the cytoskeleton. It localises to the myofibril. The protein localises to the sarcomere. It is found in the z line. Its function is as follows. Plays a role in sarcomere organization and in smooth muscle cell contraction. Required for normal development of the embryonic cardiovascular system, and for normal septation of the heart outflow tract. Plays a role in sprouting angiogenesis and is required for normal adhesion of vascular smooth muscle cells to endothelial cells during blood vessel development. Plays a role in the reorganization of the actin cytoskeleton, formation of lamellipodia and ciliogenesis. Plays a role in the establishment of cell polarity, cell adhesion, cell spreading, and directed cell migration. Within the IPP (ILK-PINCH-PARVIN) complex, binds to F-actin, promoting F-actin bundling, a process required to generate force for actin cytoskeleton reorganization and subsequent dynamic cell adhesion events such as cell spreading and migration. In Mus musculus (Mouse), this protein is Alpha-parvin (Parva).